The sequence spans 179 residues: Large ribosomal subunit protein uL5 (179 aa).

It belongs to the universal ribosomal protein uL5 family. Part of the 50S ribosomal subunit; part of the 5S rRNA/L5/L18/L25 subcomplex. Contacts the 5S rRNA and the P site tRNA. Forms a bridge to the 30S subunit in the 70S ribosome.

Functionally, this is one of the proteins that bind and probably mediate the attachment of the 5S RNA into the large ribosomal subunit, where it forms part of the central protuberance. In the 70S ribosome it contacts protein S13 of the 30S subunit (bridge B1b), connecting the 2 subunits; this bridge is implicated in subunit movement. Contacts the P site tRNA; the 5S rRNA and some of its associated proteins might help stabilize positioning of ribosome-bound tRNAs. This chain is Large ribosomal subunit protein uL5, found in Bacillus cereus (strain G9842).